Consider the following 414-residue polypeptide: Collagenase (414 aa).

The protein belongs to the peptidase U32 family. In terms of assembly, homodimer. Requires a metal cation as cofactor.

Functionally, has collagenase activity. Hydrolyzes type I collagen. May play a role in virulence. This Porphyromonas gingivalis (strain ATCC BAA-308 / W83) protein is Collagenase (prtC).